We begin with the raw amino-acid sequence, 380 residues long: Mitogen-activated protein kinase mpkC (380 aa).

Positions tyrosine 20–leucine 300 constitute a Protein kinase domain. Residues isoleucine 26–valine 34 and lysine 49 contribute to the ATP site. The Proton acceptor role is filled by aspartate 141. At threonine 171 the chain carries Phosphothreonine. The TXY motif lies at threonine 171–tyrosine 173. Tyrosine 173 is subject to Phosphotyrosine.

Belongs to the protein kinase superfamily. Ser/Thr protein kinase family. MAP kinase subfamily. HOG1 sub-subfamily. Mg(2+) is required as a cofactor. Post-translationally, dually phosphorylated on Thr-171 and Tyr-173, which activates the enzyme.

It carries out the reaction L-seryl-[protein] + ATP = O-phospho-L-seryl-[protein] + ADP + H(+). It catalyses the reaction L-threonyl-[protein] + ATP = O-phospho-L-threonyl-[protein] + ADP + H(+). With respect to regulation, activated by tyrosine and threonine phosphorylation. Mitogen-activated protein kinase required for growth on media where sorbitol or mannitol is the sole carbon source. The chain is Mitogen-activated protein kinase mpkC (mpkC) from Aspergillus clavatus (strain ATCC 1007 / CBS 513.65 / DSM 816 / NCTC 3887 / NRRL 1 / QM 1276 / 107).